We begin with the raw amino-acid sequence, 435 residues long: Methylenetetrahydrofolate--tRNA-(uracil-5-)-methyltransferase TrmFO (435 aa).

9-14 (GGGLAG) is an FAD binding site.

It belongs to the MnmG family. TrmFO subfamily. The cofactor is FAD.

The protein localises to the cytoplasm. The catalysed reaction is uridine(54) in tRNA + (6R)-5,10-methylene-5,6,7,8-tetrahydrofolate + NADH + H(+) = 5-methyluridine(54) in tRNA + (6S)-5,6,7,8-tetrahydrofolate + NAD(+). It carries out the reaction uridine(54) in tRNA + (6R)-5,10-methylene-5,6,7,8-tetrahydrofolate + NADPH + H(+) = 5-methyluridine(54) in tRNA + (6S)-5,6,7,8-tetrahydrofolate + NADP(+). Catalyzes the folate-dependent formation of 5-methyl-uridine at position 54 (M-5-U54) in all tRNAs. This is Methylenetetrahydrofolate--tRNA-(uracil-5-)-methyltransferase TrmFO from Geobacter sp. (strain M21).